The chain runs to 301 residues: UDP-N-acetylenolpyruvoylglucosamine reductase 1 (301 aa).

An FAD-binding PCMH-type domain is found at 29 to 196; the sequence is KIGGPADILI…LEAEFQLQIG (168 aa). The active site involves R174. The active-site Proton donor is S225. E295 is a catalytic residue.

It belongs to the MurB family. FAD is required as a cofactor.

The protein localises to the cytoplasm. It carries out the reaction UDP-N-acetyl-alpha-D-muramate + NADP(+) = UDP-N-acetyl-3-O-(1-carboxyvinyl)-alpha-D-glucosamine + NADPH + H(+). It functions in the pathway cell wall biogenesis; peptidoglycan biosynthesis. Cell wall formation. The chain is UDP-N-acetylenolpyruvoylglucosamine reductase 1 (murB1) from Bacillus anthracis.